We begin with the raw amino-acid sequence, 430 residues long: MAASTGKLRTLFSAHSSLSARPSSALPALRLTILRSYATTTPPDSSISDPSNSSTTVKRPPTAFKDKLNAGPAFSDFVSGKKDEPLDPAEAYALKTALVGPAGRKKEITRLPSWLKTPIPDSSNYKRIKNDLRGLNLHTVCEEARCPNISDCWGGSSKSAATATIMLMGDTCTRGCRFCSVKTSNKPPPLDPHEPENTAEALSRWGLGYVVLTSVDRDDLADGGARHFAETVLKIKQKAPNILVECLTGDYAGDLEMVALVANSGLDVYAHNVETVEALTPFVRDRRATFQQSLRVLKAAKATKPELITKTSLMLGLGETEAQLWDTLRALRAIDVDVVTFGQYMRPTKRHMAVHEYVRPDVFDMWKERALEMGFLYCASGPLVRSSYKAGEAFIENVLKKKRGKNVGSASGKGTTSENVEKLVAGEAVR.

The transit peptide at Met1–Tyr37 directs the protein to the mitochondrion. A compositionally biased stretch (low complexity) spans Thr40–Thr56. The interval Thr40–Ala63 is disordered. 7 residues coordinate [4Fe-4S] cluster: Cys141, Cys146, Cys152, Cys172, Cys176, Cys179, and Ser387. The Radical SAM core domain maps to Gly155–Leu376.

This sequence belongs to the radical SAM superfamily. Lipoyl synthase family. [4Fe-4S] cluster is required as a cofactor.

It is found in the mitochondrion. It catalyses the reaction [[Fe-S] cluster scaffold protein carrying a second [4Fe-4S](2+) cluster] + N(6)-octanoyl-L-lysyl-[protein] + 2 oxidized [2Fe-2S]-[ferredoxin] + 2 S-adenosyl-L-methionine + 4 H(+) = [[Fe-S] cluster scaffold protein] + N(6)-[(R)-dihydrolipoyl]-L-lysyl-[protein] + 4 Fe(3+) + 2 hydrogen sulfide + 2 5'-deoxyadenosine + 2 L-methionine + 2 reduced [2Fe-2S]-[ferredoxin]. The protein operates within protein modification; protein lipoylation via endogenous pathway; protein N(6)-(lipoyl)lysine from octanoyl-[acyl-carrier-protein]: step 2/2. Functionally, catalyzes the radical-mediated insertion of two sulfur atoms into the C-6 and C-8 positions of the octanoyl moiety bound to the lipoyl domains of lipoate-dependent enzymes, thereby converting the octanoylated domains into lipoylated derivatives. This Ajellomyces dermatitidis (strain ER-3 / ATCC MYA-2586) (Blastomyces dermatitidis) protein is Lipoyl synthase, mitochondrial.